The following is a 204-amino-acid chain: MTSVSFLSKIQALFAPKPELPAAKWLVVGLGNPGAKYESTRHNVGYMCQDMLIDAHQQQPLTPATGYKALTTQLAPGVLAVRSTTFMNHSGQGVAPIAAALGIPAERIIVIHDELDLPAGKVRLKKGGNENGHNGLKSLTEELGTRDYLRVRIGISRPPAGMAVPDYVLEPVDHDQPGIELAAEAVDLLLAQGLSAAQNAIHSR.

Y37 serves as a coordination point for tRNA. H42 functions as the Proton acceptor in the catalytic mechanism. Residues F86, N88, and N134 each coordinate tRNA.

Belongs to the PTH family. As to quaternary structure, monomer.

It is found in the cytoplasm. The catalysed reaction is an N-acyl-L-alpha-aminoacyl-tRNA + H2O = an N-acyl-L-amino acid + a tRNA + H(+). Hydrolyzes ribosome-free peptidyl-tRNAs (with 1 or more amino acids incorporated), which drop off the ribosome during protein synthesis, or as a result of ribosome stalling. In terms of biological role, catalyzes the release of premature peptidyl moieties from peptidyl-tRNA molecules trapped in stalled 50S ribosomal subunits, and thus maintains levels of free tRNAs and 50S ribosomes. In Corynebacterium glutamicum (strain ATCC 13032 / DSM 20300 / JCM 1318 / BCRC 11384 / CCUG 27702 / LMG 3730 / NBRC 12168 / NCIMB 10025 / NRRL B-2784 / 534), this protein is Peptidyl-tRNA hydrolase 2.